The following is a 60-amino-acid chain: MAVQQNKKSRSKRDMRRSHDALTGPTLSVDAVSGEKHLRHHVTADGFYRGRKVINKGSDE.

Residues 1 to 28 (MAVQQNKKSRSKRDMRRSHDALTGPTLS) form a disordered region. Basic residues predominate over residues 7–16 (KKSRSKRDMR).

It belongs to the bacterial ribosomal protein bL32 family.

This is Large ribosomal subunit protein bL32 from Cellvibrio japonicus (strain Ueda107) (Pseudomonas fluorescens subsp. cellulosa).